We begin with the raw amino-acid sequence, 875 residues long: DNA gyrase subunit A (875 aa).

A Topo IIA-type catalytic domain is found at 34 to 533; the sequence is LPDVRDGLKP…NSADINLEDL (500 aa). Catalysis depends on tyrosine 122, which acts as the O-(5'-phospho-DNA)-tyrosine intermediate. The GyrA-box motif lies at 560-566; it reads QRRGGKG. The interval 841 to 875 is disordered; it reads EPVDEEDLDTIDGSAAEGDDEIAPEVDVDDEPEEE. Residues 857–875 are compositionally biased toward acidic residues; it reads EGDDEIAPEVDVDDEPEEE.

The protein belongs to the type II topoisomerase GyrA/ParC subunit family. Heterotetramer, composed of two GyrA and two GyrB chains. In the heterotetramer, GyrA contains the active site tyrosine that forms a transient covalent intermediate with DNA, while GyrB binds cofactors and catalyzes ATP hydrolysis.

It is found in the cytoplasm. It catalyses the reaction ATP-dependent breakage, passage and rejoining of double-stranded DNA.. In terms of biological role, a type II topoisomerase that negatively supercoils closed circular double-stranded (ds) DNA in an ATP-dependent manner to modulate DNA topology and maintain chromosomes in an underwound state. Negative supercoiling favors strand separation, and DNA replication, transcription, recombination and repair, all of which involve strand separation. Also able to catalyze the interconversion of other topological isomers of dsDNA rings, including catenanes and knotted rings. Type II topoisomerases break and join 2 DNA strands simultaneously in an ATP-dependent manner. This chain is DNA gyrase subunit A, found in Shigella flexneri.